The primary structure comprises 116 residues: NADH-ubiquinone oxidoreductase chain 3 (116 aa).

The next 3 helical transmembrane spans lie at 3–23 (LITT…TISF), 56–76 (FFLI…LLPL), and 87–107 (LTLI…IYEW).

It belongs to the complex I subunit 3 family.

The protein localises to the mitochondrion membrane. It catalyses the reaction a ubiquinone + NADH + 5 H(+)(in) = a ubiquinol + NAD(+) + 4 H(+)(out). In terms of biological role, core subunit of the mitochondrial membrane respiratory chain NADH dehydrogenase (Complex I) that is believed to belong to the minimal assembly required for catalysis. Complex I functions in the transfer of electrons from NADH to the respiratory chain. The immediate electron acceptor for the enzyme is believed to be ubiquinone. The sequence is that of NADH-ubiquinone oxidoreductase chain 3 (MT-ND3) from Oncorhynchus keta (Chum salmon).